The following is a 388-amino-acid chain: Spermosin (388 aa).

The N-terminal stretch at 1–22 (MAAINVIFISGAIALFALTGSC) is a signal peptide. Residues 29–49 (FTNKPYATQNPYSPPQTNQPT) show a composition bias toward polar residues. Positions 29–98 (FTNKPYATQN…SENSESENSE (70 aa)) are disordered. Pro residues predominate over residues 54–64 (QPGPAPTPAPY). 5 cysteine pairs are disulfide-bonded: C116–C251, C163–C179, C265–C330, C295–C310, and C320–C349. In terms of domain architecture, Peptidase S1 spans 130–372 (IVGGAEAVPN…NLEWLCCYMP (243 aa)). Residues H178 and D231 each act as charge relay system in the active site. The Charge relay system role is filled by S324.

Belongs to the peptidase S1 family. In terms of assembly, heterodimer of a heavy chain and either an L1 light chain or an L2 light chain linked by a disulfide bond. Detected in sperm, but not in unfertilized eggs (at protein level). Expressed in gonad, but not in hepatopancreas, intestine or branchial basket.

Its subcellular location is the secreted. The enzyme catalyses Hydrolyzes arginyl bonds, preferably with Pro in the P2 position.. Its activity is regulated as follows. Inhibited by peptidyl-argininals with Pro in the P2 position, diisopropyl fluorophosphate, phenylmethanesulfonyl fluoride, leupeptin, antipain, soybean trypsin inhibitor, aprotinin, ovomucoid, valyl-prolyl-arginyl-chloromethane, glycyl-valyl-arginyl-chloromethane, p-aminobenzamidine, benzamidine, zinc chloride and mercuric chloride. Its function is as follows. Trypsin-like protease with a narrow substrate specificity. Preferentially hydrolyzes substrates with Pro in the P2 position and Val in the P3 position. Plays a role in fertilization. The sequence is that of Spermosin from Halocynthia roretzi (Sea squirt).